Consider the following 462-residue polypeptide: MAEKNMETIVNLAKHRGFVFPGSEIYGGLANTWDYGPLGVELKNNVKRAWWQKFVQQSPYNVGLDAAILMNPKTWEASGHLSNFNDPMIDNKDSKIRYRADKLIEDYMHAQGDEHFIADGMSFDEMKQFIDEKGIVCPVSGTANWTEIRQFNLMFKTFQGVTESSTNEIFLRPETAQGIFVNYKNVQRSMRKKLPFGIAQVGKSFRNEITPGNFIFRTREFEQMELEFFCKPGTEIEWQEYWKNFAAKWLKDLGIKEENTKLRDHDEDELSHYSNATTDIEYKFPFGWGELWGIASRTDFDLKAHMAASGDDFSYHDQETNEKYVPYCIEPSLGADRVTLAFLCDAYEEETLEGGDSRTVMRFHPALAPYKAAILPLSKKLSPDAMKVYEALSADFAIDFDESQSIGKRYRRQDEIGTPFCITFDFDSLEDNQVTVRDRDTMEQVRMPISEVKAFLDEKIKF.

Substrate-binding residues include Arg99 and Glu174. Residues 206–208 (RNE), 216–221 (FRTREF), 290–291 (EL), and 334–337 (GADR) each bind ATP. Position 221–225 (221–225 (FEQME)) interacts with substrate. A substrate-binding site is contributed by 330–334 (EPSLG).

The protein belongs to the class-II aminoacyl-tRNA synthetase family. Homodimer.

The protein localises to the cytoplasm. The catalysed reaction is tRNA(Gly) + glycine + ATP = glycyl-tRNA(Gly) + AMP + diphosphate. In terms of biological role, catalyzes the attachment of glycine to tRNA(Gly). This Macrococcus caseolyticus (strain JCSC5402) (Macrococcoides caseolyticum) protein is Glycine--tRNA ligase.